Here is a 477-residue protein sequence, read N- to C-terminus: Cyclin-A1-2 (477 aa).

It belongs to the cyclin family. Cyclin AB subfamily.

The chain is Cyclin-A1-2 (CYCA1-2) from Oryza sativa subsp. japonica (Rice).